A 233-amino-acid chain; its full sequence is Eukaryotic translation initiation factor 4E-1 (233 aa).

The interval 1–51 (MVVEDALKTSASEDQAKTETNPKPREEDDEPEEGEIVGDEESASKPSKGIA) is disordered. Basic and acidic residues predominate over residues 14-26 (DQAKTETNPKPRE). Positions 27-41 (EDDEPEEGEIVGDEE) are enriched in acidic residues. EIF4G-binding regions lie at residues 55-58 (HALE) and 65-104 (FDSPAAKSAKTKQEDWGSSIRPIYTFSTVEEFWSIYNNIR). Residues 76–81 (KQEDWG), Lys108, and 126–127 (WE) each bind mRNA. Cys131 and Cys169 are joined by a disulfide. Positions 152–161 (YTLLGMIGEQ) are EIF4G-binding. MRNA contacts are provided by residues 176 to 181 (RNRQEK) and 221 to 225 (MRHER).

The protein belongs to the eukaryotic initiation factor 4E family. In terms of assembly, EIF4F is a multi-subunit complex, the composition of which varies with external and internal environmental conditions. It is composed of at least EIF4A, EIF4E and EIF4G. EIF4E is also known to interact with other partners. In higher plants two isoforms of EIF4F have been identified, named isoform EIF4F and isoform EIF(iso)4F. Isoform EIF4F has subunits p220 and p26, whereas isoform EIF(iso)4F has subunits p82 and p28. As to quaternary structure, (Microbial infection) Does not interact with the VPg of Plum pox virus (PPV) strain D. According to the redox status, the Cys-131-Cys-169 disulfide bridge may have a role in regulating protein function by affecting its ability to bind capped mRNA. In terms of tissue distribution, mostly expressed in leaves, flower buds, leaf buds and anthers, to a lower extent in roots, stems and green immature fruit, and, at low levels, in petals.

Its subcellular location is the nucleus. It is found in the cytoplasm. In terms of biological role, component of the protein complex eIF4F, which is involved in the recognition of the mRNA cap, ATP-dependent unwinding of 5'-terminal secondary structure and recruitment of mRNA to the ribosome. Recognizes and binds the 7-methylguanosine-containing mRNA cap during an early step in the initiation of protein synthesis and facilitates ribosome binding by inducing the unwinding of the mRNAs secondary structures. (Microbial infection) Not involved in the plum pox virus (PPV) strain D infection process. The chain is Eukaryotic translation initiation factor 4E-1 from Prunus domestica (Garden plum).